The following is an 865-amino-acid chain: Alanine--tRNA ligase (865 aa).

Zn(2+) is bound by residues histidine 554, histidine 558, cysteine 656, and histidine 660.

This sequence belongs to the class-II aminoacyl-tRNA synthetase family. The cofactor is Zn(2+).

Its subcellular location is the cytoplasm. It catalyses the reaction tRNA(Ala) + L-alanine + ATP = L-alanyl-tRNA(Ala) + AMP + diphosphate. In terms of biological role, catalyzes the attachment of alanine to tRNA(Ala) in a two-step reaction: alanine is first activated by ATP to form Ala-AMP and then transferred to the acceptor end of tRNA(Ala). Also edits incorrectly charged Ser-tRNA(Ala) and Gly-tRNA(Ala) via its editing domain. The polypeptide is Alanine--tRNA ligase (Francisella tularensis subsp. tularensis (strain WY96-3418)).